The following is a 414-amino-acid chain: MKIYLVGGAVRDSLLGLPVTEKDWVVVGATPEHLLAQGYQQVGKDFPVFLHPISRDEYALARTERKSGKGYTGFVCHAEPDVTLEQDLLRRDLTINAIARTERGDLIDPYHGRRDLDNRVLRHVSDAFSEDPLRVLRVARFAARFAHLGFQIAEETMALMQKMAHEGELAFLTPERVWKETEKALGTSSPDVYFQVLRDCGALAVLFPEIDNLYGVPAPAKWHPEIDTGIHTMMTVAMAARLSPDIDVRFATLCHDLGKGLTPPELWPRHLGHGPAGVKLVEALCQRLRVPNPIRDLAKLVAEYHDLVHTVQVLQPKTLLKLFDAIDVWRKPQRLEQLALTSEADARGRTSFEENPYPQGNYLREAFRVASQVSSASVVADGFKGIDVRNELARRRIHALADWKAQQPDVSSTS.

ATP contacts are provided by Gly8 and Arg11. CTP-binding residues include Gly8 and Arg11. 2 residues coordinate Mg(2+): Glu21 and Asp23. 3 residues coordinate ATP: Arg91, Arg137, and Arg140. Arg91, Arg137, and Arg140 together coordinate CTP. The 102-residue stretch at 228 to 329 folds into the HD domain; that stretch reads TGIHTMMTVA…LKLFDAIDVW (102 aa).

This sequence belongs to the tRNA nucleotidyltransferase/poly(A) polymerase family. Bacterial CCA-adding enzyme type 1 subfamily. In terms of assembly, monomer. Can also form homodimers and oligomers. It depends on Mg(2+) as a cofactor. Ni(2+) is required as a cofactor.

It catalyses the reaction a tRNA precursor + 2 CTP + ATP = a tRNA with a 3' CCA end + 3 diphosphate. The enzyme catalyses a tRNA with a 3' CCA end + 2 CTP + ATP = a tRNA with a 3' CCACCA end + 3 diphosphate. Its function is as follows. Catalyzes the addition and repair of the essential 3'-terminal CCA sequence in tRNAs without using a nucleic acid template. Adds these three nucleotides in the order of C, C, and A to the tRNA nucleotide-73, using CTP and ATP as substrates and producing inorganic pyrophosphate. tRNA 3'-terminal CCA addition is required both for tRNA processing and repair. Also involved in tRNA surveillance by mediating tandem CCA addition to generate a CCACCA at the 3' terminus of unstable tRNAs. While stable tRNAs receive only 3'-terminal CCA, unstable tRNAs are marked with CCACCA and rapidly degraded. The chain is Multifunctional CCA protein from Pectobacterium atrosepticum (strain SCRI 1043 / ATCC BAA-672) (Erwinia carotovora subsp. atroseptica).